A 632-amino-acid polypeptide reads, in one-letter code: 1-deoxy-D-xylulose-5-phosphate synthase (632 aa).

Thiamine diphosphate-binding positions include His77 and 118–120; that span reads GHS. Mg(2+) is bound at residue Asp149. Residues 150–151, Asn178, Tyr289, and Glu372 each bind thiamine diphosphate; that span reads GA. Asn178 contacts Mg(2+).

It belongs to the transketolase family. DXPS subfamily. As to quaternary structure, homodimer. It depends on Mg(2+) as a cofactor. Thiamine diphosphate serves as cofactor.

The enzyme catalyses D-glyceraldehyde 3-phosphate + pyruvate + H(+) = 1-deoxy-D-xylulose 5-phosphate + CO2. It participates in metabolic intermediate biosynthesis; 1-deoxy-D-xylulose 5-phosphate biosynthesis; 1-deoxy-D-xylulose 5-phosphate from D-glyceraldehyde 3-phosphate and pyruvate: step 1/1. In terms of biological role, catalyzes the acyloin condensation reaction between C atoms 2 and 3 of pyruvate and glyceraldehyde 3-phosphate to yield 1-deoxy-D-xylulose-5-phosphate (DXP). The chain is 1-deoxy-D-xylulose-5-phosphate synthase from Listeria innocua serovar 6a (strain ATCC BAA-680 / CLIP 11262).